The chain runs to 299 residues: uncharacterized protein (299 aa).

This is an uncharacterized protein from Mycobacterium tuberculosis (strain ATCC 25618 / H37Rv).